Here is a 271-residue protein sequence, read N- to C-terminus: Thiazole synthase (271 aa).

Lysine 95 acts as the Schiff-base intermediate with DXP in catalysis. Residues glycine 156, 182-183 (AG), and 204-205 (NT) each bind 1-deoxy-D-xylulose 5-phosphate.

It belongs to the ThiG family. As to quaternary structure, homotetramer. Forms heterodimers with either ThiH or ThiS.

Its subcellular location is the cytoplasm. It carries out the reaction [ThiS sulfur-carrier protein]-C-terminal-Gly-aminoethanethioate + 2-iminoacetate + 1-deoxy-D-xylulose 5-phosphate = [ThiS sulfur-carrier protein]-C-terminal Gly-Gly + 2-[(2R,5Z)-2-carboxy-4-methylthiazol-5(2H)-ylidene]ethyl phosphate + 2 H2O + H(+). The protein operates within cofactor biosynthesis; thiamine diphosphate biosynthesis. Functionally, catalyzes the rearrangement of 1-deoxy-D-xylulose 5-phosphate (DXP) to produce the thiazole phosphate moiety of thiamine. Sulfur is provided by the thiocarboxylate moiety of the carrier protein ThiS. In vitro, sulfur can be provided by H(2)S. The sequence is that of Thiazole synthase from Yersinia pseudotuberculosis serotype O:3 (strain YPIII).